The primary structure comprises 194 residues: Imidazoleglycerol-phosphate dehydratase (194 aa).

Belongs to the imidazoleglycerol-phosphate dehydratase family.

The protein resides in the cytoplasm. The enzyme catalyses D-erythro-1-(imidazol-4-yl)glycerol 3-phosphate = 3-(imidazol-4-yl)-2-oxopropyl phosphate + H2O. It participates in amino-acid biosynthesis; L-histidine biosynthesis; L-histidine from 5-phospho-alpha-D-ribose 1-diphosphate: step 6/9. The protein is Imidazoleglycerol-phosphate dehydratase of Lactiplantibacillus plantarum (strain ATCC BAA-793 / NCIMB 8826 / WCFS1) (Lactobacillus plantarum).